Here is a 384-residue protein sequence, read N- to C-terminus: Guanine nucleotide-binding protein alpha-2 subunit (384 aa).

Residues 1 to 23 (MGLVCSRNRRYRDSDPEENAQAA) form a disordered region. Gly-2 carries N-myristoyl glycine lipidation. The S-palmitoyl cysteine moiety is linked to residue Cys-5. The region spanning 38-384 (HIQKLLLLGA…RRNLFEAGLL (347 aa)) is the G-alpha domain. The tract at residues 41 to 54 (KLLLLGAGESGKST) is G1 motif. GTP contacts are provided by Glu-49, Ser-50, Gly-51, Lys-52, Ser-53, Thr-54, Asp-163, Leu-188, Tyr-189, Thr-194, Gly-222, Asn-288, Lys-289, Asp-291, and Ala-356. Mg(2+) is bound at residue Ser-53. A G2 motif region spans residues 186–194 (DVLYARVRT). Thr-194 contacts Mg(2+). The tract at residues 215-224 (YRLFDVGGQR) is G3 motif. The G4 motif stretch occupies residues 284 to 291 (MLFLNKFD). Positions 354-359 (TTALDQ) are G5 motif.

The protein belongs to the G-alpha family. In terms of assembly, g proteins are composed of 3 units; alpha, beta and gamma. The alpha chain contains the guanine nucleotide binding site. The cofactor is Mg(2+).

Guanine nucleotide-binding proteins (G proteins) are involved as modulators or transducers in various transmembrane signaling systems. The chain is Guanine nucleotide-binding protein alpha-2 subunit (GPA2) from Pisum sativum (Garden pea).